The primary structure comprises 240 residues: 2,3,4,5-tetrahydropyridine-2,6-dicarboxylate N-acetyltransferase (240 aa).

The protein belongs to the transferase hexapeptide repeat family. DapH subfamily.

It carries out the reaction (S)-2,3,4,5-tetrahydrodipicolinate + acetyl-CoA + H2O = L-2-acetamido-6-oxoheptanedioate + CoA. The protein operates within amino-acid biosynthesis; L-lysine biosynthesis via DAP pathway; LL-2,6-diaminopimelate from (S)-tetrahydrodipicolinate (acetylase route): step 1/3. Its function is as follows. Catalyzes the transfer of an acetyl group from acetyl-CoA to tetrahydrodipicolinate. The chain is 2,3,4,5-tetrahydropyridine-2,6-dicarboxylate N-acetyltransferase from Staphylococcus epidermidis (strain ATCC 35984 / DSM 28319 / BCRC 17069 / CCUG 31568 / BM 3577 / RP62A).